A 379-amino-acid chain; its full sequence is Sulfate adenylyltransferase (379 aa).

Belongs to the sulfate adenylyltransferase family.

The catalysed reaction is sulfate + ATP + H(+) = adenosine 5'-phosphosulfate + diphosphate. The protein operates within sulfur metabolism; hydrogen sulfide biosynthesis; sulfite from sulfate: step 1/3. The sequence is that of Sulfate adenylyltransferase from Thermococcus onnurineus (strain NA1).